A 471-amino-acid chain; its full sequence is Cytidine and dCMP deaminase domain-containing protein 1 (471 aa).

Positions 1–27 (MAESNSWRSHRESDGNRSIPNGDDARN) are disordered. CMP/dCMP-type deaminase domains lie at 57 to 153 (LWME…LLSE) and 312 to 460 (GVIR…KLNG). Residues H99, C124, C127, and H393 each coordinate Zn(2+). Residue E395 is the Proton donor of the active site. Zn(2+)-binding residues include C421 and C424.

It belongs to the cytidine and deoxycytidylate deaminase family. Zn(2+) serves as cofactor.

It catalyses the reaction 2'-deoxycytidine + H2O + H(+) = 2'-deoxyuridine + NH4(+). The catalysed reaction is cytidine + H2O + H(+) = uridine + NH4(+). In terms of biological role, catalyzes the deamination of cytidine and deoxycytidine into uridine and deoxyuridine, respectively. The sequence is that of Cytidine and dCMP deaminase domain-containing protein 1 (cdadc1) from Danio rerio (Zebrafish).